The primary structure comprises 453 residues: Gamma-aminobutyric acid receptor subunit alpha-6 (453 aa).

The first 19 residues, 1 to 19 (MASSLPWLCIILWLENALG), serve as a signal peptide directing secretion. Topologically, residues 20 to 243 (KLEVEGNFYS…FHLQRKMGYF (224 aa)) are extracellular. A glycan (N-linked (GlcNAc...) asparagine) is linked at N31. 4-aminobutanoate is bound at residue R84. N128 and N141 each carry an N-linked (GlcNAc...) asparagine glycan. T147 provides a ligand contact to 4-aminobutanoate. Cysteines 156 and 170 form a disulfide. Residues 244 to 264 (MIQIYTPCIMTVILSQVSFWI) form a helical membrane-spanning segment. Over 265-270 (NKESVP) the chain is Cytoplasmic. A helical transmembrane segment spans residues 271-290 (ARTVFGITTVLTMTTLSISA). At 291–304 (RHSLPKVSYATAMD) the chain is on the extracellular side. Residues 305 to 325 (WFIAVCFAFVFSALIEFAAVN) form a helical membrane-spanning segment. At 326–422 (YFTNLQTQKA…GTSKIDQYSR (97 aa)) the chain is on the cytoplasmic side. The residue at position 403 (T403) is a Phosphothreonine. The chain crosses the membrane as a helical span at residues 423–443 (ILFPVAFAGFNLVYWVVYLSK). Topologically, residues 444 to 453 (DTMEVSSSVE) are extracellular.

This sequence belongs to the ligand-gated ion channel (TC 1.A.9) family. Gamma-aminobutyric acid receptor (TC 1.A.9.5) subfamily. GABRA6 sub-subfamily. As to quaternary structure, heteropentamer, formed by a combination of alpha (GABRA1-6), beta (GABRB1-3), gamma (GABRG1-3), delta (GABRD), epsilon (GABRE), rho (GABRR1-3), pi (GABRP) and theta (GABRQ) chains, each subunit exhibiting distinct physiological and pharmacological properties. Binds UBQLN1. In terms of tissue distribution, expressed in brain, in cerebellar granule cells.

The protein resides in the postsynaptic cell membrane. The protein localises to the cell membrane. It catalyses the reaction chloride(in) = chloride(out). In terms of biological role, alpha subunit of the heteropentameric ligand-gated chloride channel gated by gamma-aminobutyric acid (GABA), a major inhibitory neurotransmitter in the brain. GABA-gated chloride channels, also named GABA(A) receptors (GABAAR), consist of five subunits arranged around a central pore and contain GABA active binding site(s) located at the alpha and beta subunit interface(s). When activated by GABA, GABAARs selectively allow the flow of chloride anions across the cell membrane down their electrochemical gradient. Alpha-6/GABRA6 subunits are found at both synaptic and extrasynaptic sites. Chloride influx into the postsynaptic neuron following GABAAR opening decreases the neuron ability to generate a new action potential, thereby reducing nerve transmission. Extrasynaptic alpha-6-containing receptors contribute to the tonic GABAergic inhibition. Alpha-6 subunits are also present on glutamatergic synapses. This chain is Gamma-aminobutyric acid receptor subunit alpha-6, found in Homo sapiens (Human).